We begin with the raw amino-acid sequence, 43 residues long: Cytochrome b559 subunit beta (43 aa).

Residues 18–34 form a helical membrane-spanning segment; the sequence is WLAIHGLAIPTVFFFGA. Histidine 22 is a binding site for heme.

Belongs to the PsbE/PsbF family. In terms of assembly, heterodimer of an alpha subunit and a beta subunit. PSII is composed of 1 copy each of membrane proteins PsbA, PsbB, PsbC, PsbD, PsbE, PsbF, PsbH, PsbI, PsbJ, PsbK, PsbL, PsbM, PsbT, PsbY, PsbZ, Psb30/Ycf12, at least 3 peripheral proteins of the oxygen-evolving complex and a large number of cofactors. It forms dimeric complexes. Requires heme b as cofactor.

Its subcellular location is the plastid. The protein localises to the chloroplast thylakoid membrane. Functionally, this b-type cytochrome is tightly associated with the reaction center of photosystem II (PSII). PSII is a light-driven water:plastoquinone oxidoreductase that uses light energy to abstract electrons from H(2)O, generating O(2) and a proton gradient subsequently used for ATP formation. It consists of a core antenna complex that captures photons, and an electron transfer chain that converts photonic excitation into a charge separation. This chain is Cytochrome b559 subunit beta, found in Cyanidium caldarium (Red alga).